A 487-amino-acid chain; its full sequence is MELYYLTAHELSDLLNRKEISSEEATAAIIDRIEAVDGRVQAYLTRTAEQALEEARAVDAARARGETLGPLAGVPMALKDNLCTEGVRTTCSSRMLADWVPPYDATVVRRLKEAGAVMLGKLNMDEFAMGSSTENSSFFPTRNPWDLERVPGGSSGGAVAAVAAGEAYFALGSDTGGSIRQPASFCGVVGMKPTYGRVSRYGLVAFASSLDQIGPITRDVTDCALVLEAIAGHDPLDSTSADLPVPDYRSALKPEVKGLKIGVPREYFGAGMEPEVAAIVRRAIAKLEELGAVCEETSLPHTEYALPAYYLVAPAEASSNLARYDGVSYGLRVPGKDIIEMYMNTRSQGFGPEVKRRIMLGTYALSSGYYDAYYLKALKVRTLIRRDFETAFEKYDLLATPTSPTVAFRLGEKAGDPLAMYLSDLCTIPINMAGLPALSLPCGFSQGLPVGLQLIGRPFAEATLLQAAYAFEQSTEYHRRRPELGVA.

Residues Lys79 and Ser154 each act as charge relay system in the active site. Ser178 functions as the Acyl-ester intermediate in the catalytic mechanism.

Belongs to the amidase family. GatA subfamily. As to quaternary structure, heterotrimer of A, B and C subunits.

The catalysed reaction is L-glutamyl-tRNA(Gln) + L-glutamine + ATP + H2O = L-glutaminyl-tRNA(Gln) + L-glutamate + ADP + phosphate + H(+). Functionally, allows the formation of correctly charged Gln-tRNA(Gln) through the transamidation of misacylated Glu-tRNA(Gln) in organisms which lack glutaminyl-tRNA synthetase. The reaction takes place in the presence of glutamine and ATP through an activated gamma-phospho-Glu-tRNA(Gln). The chain is Glutamyl-tRNA(Gln) amidotransferase subunit A from Moorella thermoacetica (strain ATCC 39073 / JCM 9320).